The chain runs to 482 residues: Ras GTPase-activating protein-binding protein 2 (482 aa).

The region spanning 11–133 (VGREFVRQYY…FYVHNDMFRY (123 aa)) is the NTF2 domain. Positions 140–158 (DSEPELDEESEDEVEEEQE) are enriched in acidic residues. Disordered stretches follow at residues 140–170 (DSEP…VQEN) and 187–318 (EPLE…EQND). 3 positions are modified to phosphoserine: serine 141, serine 149, and serine 225. The segment at 142–220 (EPELDEESED…PQVEEKHLEE (79 aa)) is acidic disordered region. Positions 191-225 (ESSHEPEPEPESETKTEELKPQVEEKHLEELEEKS) are enriched in basic and acidic residues. Threonine 227 is subject to Phosphothreonine. The segment covering 247–264 (ASVTSKNLPPSGTVSSSG) has biased composition (polar residues). Lysine 281 participates in a covalent cross-link: Glycyl lysine isopeptide (Lys-Gly) (interchain with G-Cter in SUMO2). The segment covering 290–300 (RVREQRPRERP) has biased composition (basic and acidic residues). Residues 331-409 (HQLFVGNLPH…VRLNVEEKKT (79 aa)) enclose the RRM domain. Lysine 392 bears the N6-succinyllysine mark. The tract at residues 404–476 (VEEKKTRAAR…GRGTGQMEGR (73 aa)) is RG-rich region. The span at 408–432 (KTRAARERETRGGGDDRRDIRRNDR) shows a compositional bias: basic and acidic residues. Positions 408 to 482 (KTRAARERET…MEGRFTGQRR (75 aa)) are disordered. Over residues 433–445 (GPGGPRGIVGGGM) the composition is skewed to gly residues. At arginine 457 the chain carries Omega-N-methylarginine. Serine 466 carries the post-translational modification Phosphoserine. Residue arginine 468 is modified to Omega-N-methylarginine.

Forms homooligomers. Forms heterodimers with G3BP1. Interacts with NFKBIA (via N-terminus). Interacts (via NTF2 domain) with USP10; inhibiting stress granule formation. Interacts (via NTF2 domain) with CAPRIN1; promoting stress granule formation. Associates (via RG-rich region) with 40S ribosome subunits. Interacts with PABPC1.

It is found in the cytoplasm. It localises to the stress granule. Its activity is regulated as follows. Under physiological conditions, G3BP2 adopts a compact state that is stabilized by intramolecular interactions between the RG-rich and the acidic regions that inhibit phase separation. Upon stress, polysomes disassemble and mRNAs are released in an unfolded protein-free state. Binding of unfolded mRNA to G3BP2 outcompetes the intramolecular interactions and RNA-bound G3BP2 adopts an expanded conformation in which the RG-rich region becomes exposed to engage in protein-protein and protein-RNA interactions, allowing physical cross-linking of RNA molecules to form protein-RNA condensates, leading to liquid-liquid phase separation (LLPS). In terms of biological role, scaffold protein that plays an essential role in cytoplasmic stress granule formation which acts as a platform for antiviral signaling. Plays an essential role in stress granule formation. Stress granules are membraneless compartments that store mRNAs and proteins, such as stalled translation pre-initiation complexes, in response to stress. Promotes formation of stress granules phase-separated membraneless compartment by undergoing liquid-liquid phase separation (LLPS) upon unfolded RNA-binding: functions as a molecular switch that triggers RNA-dependent LLPS in response to a rise in intracellular free RNA concentrations. This is Ras GTPase-activating protein-binding protein 2 (G3bp2) from Mus musculus (Mouse).